The following is a 307-amino-acid chain: Small ribosomal subunit biogenesis GTPase RsgA (307 aa).

One can recognise a CP-type G domain in the interval 80–237; it reads KADLRQTIVS…IVDTPGIKEF (158 aa). GTP contacts are provided by residues 129 to 132 and 180 to 188; these read NKID and GQSGVGKSS. Residues Cys261, Cys266, His268, and Cys274 each contribute to the Zn(2+) site.

It belongs to the TRAFAC class YlqF/YawG GTPase family. RsgA subfamily. Monomer. Associates with 30S ribosomal subunit, binds 16S rRNA. Requires Zn(2+) as cofactor.

It localises to the cytoplasm. In terms of biological role, one of several proteins that assist in the late maturation steps of the functional core of the 30S ribosomal subunit. Helps release RbfA from mature subunits. May play a role in the assembly of ribosomal proteins into the subunit. Circularly permuted GTPase that catalyzes slow GTP hydrolysis, GTPase activity is stimulated by the 30S ribosomal subunit. In Borreliella burgdorferi (strain ATCC 35210 / DSM 4680 / CIP 102532 / B31) (Borrelia burgdorferi), this protein is Small ribosomal subunit biogenesis GTPase RsgA.